The following is a 481-amino-acid chain: Putative cytochrome P450 520B1 (481 aa).

A heme-binding site is contributed by Cys-427.

The protein belongs to the cytochrome P450 family. The cofactor is heme.

The chain is Putative cytochrome P450 520B1 (cyp520B1) from Dictyostelium discoideum (Social amoeba).